The primary structure comprises 193 residues: Potassium-transporting ATPase KdpC subunit (193 aa).

A helical transmembrane segment spans residues 7 to 27; that stretch reads PLIVVFVVLVAVTGLAYPAVM.

The protein belongs to the KdpC family. The system is composed of three essential subunits: KdpA, KdpB and KdpC.

Its subcellular location is the cell inner membrane. In terms of biological role, part of the high-affinity ATP-driven potassium transport (or Kdp) system, which catalyzes the hydrolysis of ATP coupled with the electrogenic transport of potassium into the cytoplasm. This subunit acts as a catalytic chaperone that increases the ATP-binding affinity of the ATP-hydrolyzing subunit KdpB by the formation of a transient KdpB/KdpC/ATP ternary complex. This chain is Potassium-transporting ATPase KdpC subunit, found in Burkholderia mallei (strain NCTC 10247).